Reading from the N-terminus, the 140-residue chain is MSKRGRGGASGAKFRISLGLPVGAVMNCADNTGAKNLFVIAVSGIKGRLNRLPSAGVGDMFVASVKKGKPELRKKVLQAVVVRQRKQYRRIDGSSIYFEDNAGVIVNNKGEMKGSAITGPVTKECADLWPRIASNAGSIA.

Belongs to the universal ribosomal protein uL14 family.

The chain is Large ribosomal subunit protein uL14 (RPL23) from Brugia malayi (Filarial nematode worm).